Reading from the N-terminus, the 138-residue chain is Endonuclease V (138 aa).

Threonine 2 functions as the Nucleophile; via amide nitrogen in the catalytic mechanism. The active-site Proton acceptor is glutamate 23.

As to quaternary structure, monomer.

The enzyme catalyses Cleaves the N-glycosidic bond between the 5'-pyrimidine residue in cyclobutadipyrimidine (in DNA) and the corresponding deoxy-D-ribose residue.. It catalyses the reaction 2'-deoxyribonucleotide-(2'-deoxyribose 5'-phosphate)-2'-deoxyribonucleotide-DNA = a 3'-end 2'-deoxyribonucleotide-(2,3-dehydro-2,3-deoxyribose 5'-phosphate)-DNA + a 5'-end 5'-phospho-2'-deoxyribonucleoside-DNA + H(+). Functionally, participates in the repair of UV-damaged DNA by excising pyrimidine dimers that are the major UV-lesions. DNA glycosylase activity hydrolyzes the glycosylic bond of the 5' pyrimidine of the dimer. This leaves apurinic/apyrimidic (AP) sites in the DNA. These AP sites are removed by the AP lyase activity which cleaves the intrapyrimidine phosphodiester bond. Catalysis proceeds via a protonated imine covalent intermediate between the alpha-amino group of the N-terminal threonine residue and the C1' of the deoxyribose sugar of the 5' pyrimidine at the dimer site. This chain is Endonuclease V, found in Enterobacteria phage T4 (Bacteriophage T4).